The chain runs to 69 residues: uncharacterized protein (69 aa).

The first 21 residues, 1–21 (MELLIPLSLLGLYLFSGTRDS), serve as a signal peptide directing secretion. N-linked (GlcNAc...) asparagine glycosylation is present at asparagine 41.

It is found in the secreted. This is an uncharacterized protein from Dictyostelium discoideum (Social amoeba).